A 43-amino-acid polypeptide reads, in one-letter code: Mu-conotoxin-like CalTx 12.2.1E (43 aa).

Residue R1 is a propeptide. 4 disulfide bridges follow: C4/C16, C11/C24, C18/C29, and C23/C35. W31 carries the post-translational modification 6'-bromotryptophan. P36 bears the 4-hydroxyproline mark. W40 carries the 6'-bromotryptophan modification.

Expressed by the venom duct.

The protein localises to the secreted. Mu-conotoxins block voltage-gated sodium channels. This toxin reversibly blocks voltage-gated sodium channel in cephalopods, with no alteration in the voltage dependence of sodium conductance or on the kinetics of inactivation. In Californiconus californicus (California cone), this protein is Mu-conotoxin-like CalTx 12.2.1E.